The primary structure comprises 386 residues: MAAPQNAPIPEAGKKVMSTVTLAPALGFVPIAVHFDLFGCLQEIGKPATAQDVCNFHHTKYGDTDLFSITFLHNKSMFAKVNRTSDDTLFLMGGLGFLDLLPDDVYQANAVTRFLVDTPSAQHGAMHFTSEGLLASAFLMRRLMDTKFEYPFQECDTPFQYAHKLMGNDHLAREHVYSVMHETGRLDSFNTFMTGKFGRWGTMPDRVRKLGYDLDGLLQSTAPERIRVVDIGGGRGELLLEMQATYPHLLKKENLILQEYNADIGVVPEVTEMGWNYKEDASEQPVKGALLYSMAHVLHNLSDIESIKLLNKVSRVMAPSSRLLIQEFTKNAASSTTHAAMILMHAGRERTSAEWRDLAAFAGLEITFEAYPPNGECVVEMRKVLN.

Trp200 provides a ligand contact to S-adenosyl-L-methionine. His299 functions as the Proton acceptor in the catalytic mechanism.

This sequence belongs to the class I-like SAM-binding methyltransferase superfamily. Cation-independent O-methyltransferase family.

It functions in the pathway secondary metabolite biosynthesis. Functionally, O-methyltransferase; part of the gene cluster that mediates the biosynthesis of aurasperone B, a dimeric gamma-naphthopyrone. The first step in the biosynthesis of aurasperone B is the production of gamma-naphthopyrone precursor YWA1 by the non-reducing polyketide synthase albA, via condensation of one acetyl-CoA starter unit with 6 malonyl-CoA units. YWA1 is then methylated by aunE at position C-6 to yield foncesin which is further methylated at position C-8 by aunD to produce fonsecin B. A key enzyme in the biosynthetic pathway is the cytochrome P450 monooxygenase aunB which catalyzes the oxidative dimerization of fonsecin B to aurasperone B. AunB also catalyzes the oxidative dimerization of rubrofusarin B into aurasperone A. This is O-methyltransferase aunE from Aspergillus niger (strain ATCC MYA-4892 / CBS 513.88 / FGSC A1513).